A 120-amino-acid chain; its full sequence is Large ribosomal subunit protein uL22 (120 aa).

It belongs to the universal ribosomal protein uL22 family. As to quaternary structure, part of the 50S ribosomal subunit.

Its function is as follows. This protein binds specifically to 23S rRNA; its binding is stimulated by other ribosomal proteins, e.g. L4, L17, and L20. It is important during the early stages of 50S assembly. It makes multiple contacts with different domains of the 23S rRNA in the assembled 50S subunit and ribosome. In terms of biological role, the globular domain of the protein is located near the polypeptide exit tunnel on the outside of the subunit, while an extended beta-hairpin is found that lines the wall of the exit tunnel in the center of the 70S ribosome. The protein is Large ribosomal subunit protein uL22 of Corynebacterium urealyticum (strain ATCC 43042 / DSM 7109).